The primary structure comprises 959 residues: E3 ubiquitin-protein ligase arkadia-B (959 aa).

The segment covering cysteine 51–threonine 66 has biased composition (polar residues). Disordered regions lie at residues cysteine 51 to leucine 171, arginine 189 to arginine 212, and leucine 225 to methionine 271. Residues serine 112–aspartate 131 show a composition bias toward low complexity. Over residues proline 142–arginine 156 the composition is skewed to polar residues. Over residues serine 228–serine 246 the composition is skewed to low complexity. Residues threonine 256–proline 267 are compositionally biased toward polar residues. Residues valine 275–glutamate 279 carry the SUMO interaction motif 1 (SIM) motif. The short motif at glutamate 300–valine 306 is the SUMO interaction motif 2 (SIM) element. Positions histidine 318–valine 341 are disordered. Over residues tryptophan 323 to threonine 332 the composition is skewed to polar residues. The short motif at valine 355–threonine 359 is the SUMO interaction motif 3 (SIM) element. The segment covering threonine 370–methionine 397 has biased composition (polar residues). Disordered regions lie at residues threonine 370–glycine 399, histidine 475–aspartate 499, proline 615–valine 649, and proline 661–alanine 680. A compositionally biased stretch (basic residues) spans histidine 475–serine 487. Residues histidine 620–serine 632 are compositionally biased toward polar residues. The span at glutamine 633 to methionine 646 shows a compositional bias: pro residues. The ubiquitin binding stretch occupies residues tyrosine 872–histidine 874. The Zn(2+) site is built by cysteine 907 and cysteine 910. The RING-type; atypical zinc finger occupies cysteine 907–arginine 948. Positions arginine 922–methionine 926 are ubiquitin binding. Residues histidine 930 and cysteine 933 each coordinate Zn(2+).

The protein belongs to the Arkadia family. Monomer.

The protein resides in the nucleus. The protein localises to the cytoplasm. It is found in the PML body. The enzyme catalyses S-ubiquitinyl-[E2 ubiquitin-conjugating enzyme]-L-cysteine + [acceptor protein]-L-lysine = [E2 ubiquitin-conjugating enzyme]-L-cysteine + N(6)-ubiquitinyl-[acceptor protein]-L-lysine.. Its pathway is protein modification; protein ubiquitination. Its activity is regulated as follows. Binds free ubiquitin non-covalently via its RING-type zinc finger. Ubiquitin-binding leads to enhance the E3 ubiquitin-protein ligase activity by stabilizing the ubiquitin-conjugating enzyme E2 (donor ubiquitin) in the 'closed' conformation and activating ubiquitin transfer. E3 ubiquitin-protein ligase required for mesoderm patterning during embryonic development. Acts as an enhancer of the transcriptional responses of the smad2/smad3 effectors, which are activated downstream of BMP. Acts by mediating ubiquitination and degradation of SMAD inhibitors such as smad7, inducing their proteasomal degradation and thereby enhancing the transcriptional activity of TGF-beta and BMP. Specifically binds polysumoylated chains via SUMO interaction motifs (SIMs) and mediates ubiquitination of sumoylated substrates. The regulation of the BMP-SMAD signaling is however independent of sumoylation and is not dependent of SUMO interaction motifs (SIMs). This is E3 ubiquitin-protein ligase arkadia-B (rnf111-b) from Xenopus laevis (African clawed frog).